A 682-amino-acid polypeptide reads, in one-letter code: MSRKQLALFEPVLLVQALTDAVKKLSPRAQWRNPVMFVVWASSVLTTLLTLAMVTGQIAGSALFTGVISLWLWFTVLFANFAEALAEGRSKAQANSLKGVKKTAFARRLRAPRHDAQADNVPAAELRKGDIVLVKAGDIIPCDGEVIEGGASVDESAITGESAPVIRESGGDFASVTGGTRILSDWLVIACSVNPGETFLDRMIAMVEGAQRRKTPNEIALTILLIALTIVFLLATATLWPFSAWGGNAVSVTVLVALLVCLIPTTIGGLLSAIGVAGMSRMLGANVIATSGRAVEAAGDVDVLLLDKTGTITLGNRQASDFIPARGVDERTLADAAQLASLADETPEGRSIVILAKQRFNLRERDVQSLHATFVPFTAQSRMSGINIDNRMIRKGSVDAIRRHVESNGGHFPADVEQNVENVARLGATPLVVVEGARVLGVIALKDIVKGGIKERFAQLRKMGIKTVMITGDNRLTAEAFAAEAGVDDFLAEATPEAKLALIRQYQAEGRLVAMTGDGTNDAPALAQADVAVAMNSGTQAAKEAGNMVDLDSNPTKLIEVVHIGKQMLMTRGSLTTFSIANDVAKYFAIIPAAFAATYPQLNALNVMGLHSPNSAILSAVIFNALIIIFLIPLALKGVSYKPLSASAMLRRNLWIYGLGGLVVPFIGIKVIDVLLTLLGLA.

4 helical membrane-spanning segments follow: residues 34-54 (PVMF…LAMV), 58-78 (IAGS…TVLF), 219-239 (IALT…TATL), and 254-274 (VLVA…LSAI). D307 acts as the 4-aspartylphosphate intermediate in catalysis. ATP is bound by residues D344, E348, 377 to 384 (FTAQSRMS), and K395. Mg(2+) contacts are provided by D518 and D522. Transmembrane regions (helical) follow at residues 588-608 (FAII…LNVM), 616-636 (AILS…PLAL), and 662-682 (LVVP…LGLA).

Belongs to the cation transport ATPase (P-type) (TC 3.A.3) family. Type IA subfamily. The system is composed of three essential subunits: KdpA, KdpB and KdpC.

It is found in the cell inner membrane. The catalysed reaction is K(+)(out) + ATP + H2O = K(+)(in) + ADP + phosphate + H(+). Part of the high-affinity ATP-driven potassium transport (or Kdp) system, which catalyzes the hydrolysis of ATP coupled with the electrogenic transport of potassium into the cytoplasm. This subunit is responsible for energy coupling to the transport system and for the release of the potassium ions to the cytoplasm. The sequence is that of Potassium-transporting ATPase ATP-binding subunit from Salmonella choleraesuis (strain SC-B67).